The primary structure comprises 37 residues: Esculentin-2Ra (37 aa).

Residues Cys31 and Cys37 are joined by a disulfide bond.

As to expression, expressed by the skin glands.

It localises to the secreted. Functionally, antimicrobial peptide. In Pelophylax ridibundus (Marsh frog), this protein is Esculentin-2Ra.